We begin with the raw amino-acid sequence, 183 residues long: MSRKAREPILLPQGVEVSIQDDKIIVKGPKGSLTQKSVKEVEITLKDNSIFVHAAPHVVDRPSCMQGLYWALISNMVQGVHLGFEKRLEMIGVGFRASVQGAFLDLSIGVSHPTKIPIPSTLQVSVEKNTLISVKGLDKQLVGEFAASIRAKRPPEPYKGKGIRYENEYVRRKAGKAAKTGKK.

The protein belongs to the universal ribosomal protein uL6 family. In terms of assembly, part of the 50S ribosomal subunit.

Its function is as follows. This protein binds to the 23S rRNA, and is important in its secondary structure. It is located near the subunit interface in the base of the L7/L12 stalk, and near the tRNA binding site of the peptidyltransferase center. The chain is Large ribosomal subunit protein uL6 from Chlamydia pneumoniae (Chlamydophila pneumoniae).